The sequence spans 423 residues: Glucuronoxylanase XynC (423 aa).

The first 33 residues, 1–33, serve as a signal peptide directing secretion; the sequence is MMSSVKKTICVLLVCFTMMSVMLLGPGVTEVSA. The active-site Proton donor is Glu172. Glu261 serves as the catalytic Nucleophile.

It belongs to the glycosyl hydrolase 30 family.

The protein resides in the secreted. It catalyses the reaction Endohydrolysis of (1-&gt;4)-beta-D-xylosyl links in some glucuronoarabinoxylans.. Its pathway is glycan degradation; xylan degradation. Catalyzes the depolymerization of methylglucuronoxylan (MeGAXn). It cleaves the beta-1,4-xylosidic bond penultimate to that linking carbon one of the xylose residue substituted with alpha-1,2-linked 4-O-methyl-D-glucuronate (MeGA). The protein is Glucuronoxylanase XynC (xynC) of Bacillus subtilis.